We begin with the raw amino-acid sequence, 157 residues long: MTIEIGQKAPDLELKGDHGETVKLSDYKGKYIVLYFYPKDMTPGCTTEACDFRDSHESFAELDAVIIGVSPDSQEKHGKFKEKHNLPFLLLVDDEHKLAEAFDVWKLKKNFGKEYMGIERSTFLIDKEGRLIKEWRKVKVKDHVAEALQTLKDMSEK.

Residues Ile3–Glu156 enclose the Thioredoxin domain. Residue Cys45 is the Cysteine sulfenic acid (-SOH) intermediate of the active site. Cys45 and Cys50 form a disulfide bridge.

Belongs to the peroxiredoxin family. BCP/PrxQ subfamily. In terms of assembly, monomer.

The enzyme catalyses a hydroperoxide + [thioredoxin]-dithiol = an alcohol + [thioredoxin]-disulfide + H2O. Functionally, thiol-specific peroxidase that catalyzes the reduction of hydrogen peroxide and organic hydroperoxides to water and alcohols, respectively. Plays a role in cell protection against oxidative stress by detoxifying peroxides and as sensor of hydrogen peroxide-mediated signaling events. The protein is Peroxiredoxin Bcp (ygaF) of Bacillus subtilis (strain 168).